The primary structure comprises 363 residues: 3-isopropylmalate dehydrogenase (363 aa).

78 to 91 (GPKWENLPPESQPE) is an NAD(+) binding site. Substrate contacts are provided by R99, R109, R138, and D227. Mg(2+)-binding residues include D227, D251, and D255. 285 to 297 (GSAPDIAGKNIAN) provides a ligand contact to NAD(+).

This sequence belongs to the isocitrate and isopropylmalate dehydrogenases family. LeuB type 1 subfamily. In terms of assembly, homodimer. Mg(2+) is required as a cofactor. The cofactor is Mn(2+).

It is found in the cytoplasm. The catalysed reaction is (2R,3S)-3-isopropylmalate + NAD(+) = 4-methyl-2-oxopentanoate + CO2 + NADH. It functions in the pathway amino-acid biosynthesis; L-leucine biosynthesis; L-leucine from 3-methyl-2-oxobutanoate: step 3/4. Functionally, catalyzes the oxidation of 3-carboxy-2-hydroxy-4-methylpentanoate (3-isopropylmalate) to 3-carboxy-4-methyl-2-oxopentanoate. The product decarboxylates to 4-methyl-2 oxopentanoate. This chain is 3-isopropylmalate dehydrogenase, found in Salmonella choleraesuis (strain SC-B67).